The sequence spans 426 residues: MIRSARLISNIKFGQKNIRQFSTNTNWWANVQKGPEDPILGVSIAYNKDTSPSKINLGVGAYRDENGKPYVLDCVKKADKKIYEANVDHEYAPIVGVAAFNQLAAQLALGEECKHIKEKRIATVQSISGTGALRIAADFFARFLKGKTAYVPNPTWGNHNVIFNDAGIPVKSYGYYNPATCGLNFEAMTKDIAAAPEGSIILLHACAHNPTGVDPTAEQWKKISEICKERGHFVLFDFAYQGFASGSPEKDAAAVRMFVEDGHNIALCQSFAKNFGLYGERIGAFSILTETSDQALNVESQLKILIRPMYSNPPVYGARLVQAILKDKELTNEWRSEVKGMADRIINMREQLVKYLKKHGSTRDWSHITTQIGMFCFTGLTPEQVDRLANEYHIYLTRNGRISIAGINSTNVEYLAKAMAAVTKDN.

The transit peptide at Met1–Ala29 directs the protein to the mitochondrion. Substrate contacts are provided by Gly60, Trp156, and Asn209. The residue at position 273 (Lys273) is an N6-(pyridoxal phosphate)lysine. Residue Arg401 participates in substrate binding.

Belongs to the class-I pyridoxal-phosphate-dependent aminotransferase family. As to quaternary structure, homodimer. The cofactor is pyridoxal 5'-phosphate.

It is found in the mitochondrion matrix. The protein resides in the cell membrane. It carries out the reaction L-aspartate + 2-oxoglutarate = oxaloacetate + L-glutamate. The catalysed reaction is L-kynurenine + 2-oxoglutarate = kynurenate + L-glutamate + H2O. Plays a key role in amino acid metabolism. Important for metabolite exchange between mitochondria and cytosol. This Dictyostelium discoideum (Social amoeba) protein is Aspartate aminotransferase, mitochondrial (aatA).